A 117-amino-acid chain; its full sequence is Small ribosomal subunit protein bS6 (117 aa).

The interval 97 to 117 is disordered; that stretch reads TEEPSAILTKKDDRRGRRERN.

This sequence belongs to the bacterial ribosomal protein bS6 family.

Its function is as follows. Binds together with bS18 to 16S ribosomal RNA. The sequence is that of Small ribosomal subunit protein bS6 from Maricaulis maris (strain MCS10) (Caulobacter maris).